A 291-amino-acid chain; its full sequence is ATP synthase gamma chain (291 aa).

The protein belongs to the ATPase gamma chain family. In terms of assembly, F-type ATPases have 2 components, CF(1) - the catalytic core - and CF(0) - the membrane proton channel. CF(1) has five subunits: alpha(3), beta(3), gamma(1), delta(1), epsilon(1). CF(0) has three main subunits: a, b and c.

The protein resides in the cell membrane. Produces ATP from ADP in the presence of a proton gradient across the membrane. The gamma chain is believed to be important in regulating ATPase activity and the flow of protons through the CF(0) complex. This Buchnera aphidicola subsp. Baizongia pistaciae (strain Bp) protein is ATP synthase gamma chain.